We begin with the raw amino-acid sequence, 482 residues long: Variant surface glycoprotein ANTAT 1.1C (482 aa).

A signal peptide spans 1 to 8 (LHPQQALA). 2 disulfide bridges follow: cysteine 24–cysteine 151 and cysteine 133–cysteine 188. N-linked (GlcNAc...) asparagine glycosylation is present at asparagine 92. Residues asparagine 398 and asparagine 411 are each glycosylated (N-linked (GlcNAc...) asparagine). Aspartate 459 is lipidated: GPI-anchor amidated aspartate. Residues 460-482 (SSILVTKKFALSLVSAAFASLLF) constitute a propeptide, removed in mature form.

It is found in the cell membrane. Functionally, VSG forms a coat on the surface of the parasite. The trypanosome evades the immune response of the host by expressing a series of antigenically distinct VSGs from an estimated 1000 VSG genes. The protein is Variant surface glycoprotein ANTAT 1.1C of Trypanosoma brucei brucei.